We begin with the raw amino-acid sequence, 137 residues long: Nucleoside diphosphate kinase (137 aa).

6 residues coordinate ATP: Lys-11, Phe-59, Arg-87, Thr-93, Arg-104, and Asn-114. Catalysis depends on His-117, which acts as the Pros-phosphohistidine intermediate.

This sequence belongs to the NDK family. In terms of assembly, homotetramer. Mg(2+) is required as a cofactor.

It is found in the cytoplasm. The enzyme catalyses a 2'-deoxyribonucleoside 5'-diphosphate + ATP = a 2'-deoxyribonucleoside 5'-triphosphate + ADP. The catalysed reaction is a ribonucleoside 5'-diphosphate + ATP = a ribonucleoside 5'-triphosphate + ADP. In terms of biological role, major role in the synthesis of nucleoside triphosphates other than ATP. The ATP gamma phosphate is transferred to the NDP beta phosphate via a ping-pong mechanism, using a phosphorylated active-site intermediate. The protein is Nucleoside diphosphate kinase of Parafrankia sp. (strain EAN1pec).